A 312-amino-acid polypeptide reads, in one-letter code: HTH-type transcriptional regulator MetR (312 aa).

The HTH lysR-type domain occupies 1–59 (MIEIKHLRTLQALKNNGSLSAAAIQLHQTQSAISHQFNELEKKLGFKLFIRKSNPIKFT). Residues 19–38 (LSAAAIQLHQTQSAISHQFN) constitute a DNA-binding region (H-T-H motif).

The protein belongs to the LysR transcriptional regulatory family.

It is found in the cytoplasm. In terms of biological role, control of the last step in methionine biosynthesis; MetR is a positive activator of the metA, metE and metH genes. The chain is HTH-type transcriptional regulator MetR (metR) from Buchnera aphidicola subsp. Schizaphis graminum (strain Sg).